A 780-amino-acid chain; its full sequence is Dynamin-related protein 3B (780 aa).

Ser2 carries the N-acetylserine modification. The Dynamin-type G domain maps to 40-315; the sequence is TIALPQVAVV…LVQHIKALLP (276 aa). The tract at residues 50 to 57 is G1 motif; the sequence is GSQSSGKS. 50 to 57 contributes to the GTP binding site; that stretch reads GSQSSGKS. The interval 76-78 is G2 motif; that stretch reads CTR. Positions 157–160 are G3 motif; that stretch reads DLPG. GTP-binding positions include 157–161 and 226–229; these read DLPGI and TKLD. The segment at 226–229 is G4 motif; that stretch reads TKLD. The tract at residues 256–259 is G5 motif; it reads VNRS. Disordered stretches follow at residues 536-558 and 573-592; these read PVAR…QIKT and QAVP…STSW. Positions 539–548 are enriched in basic and acidic residues; the sequence is RPRDTVEPER. Residues 549 to 558 are compositionally biased toward polar residues; it reads TASSGSQIKT. One can recognise a GED domain in the interval 654–745; it reads IEITKLLLKS…TLDELPLEAE (92 aa). A compositionally biased stretch (basic and acidic residues) spans 753 to 770; it reads IGSEAKHEELPGTRRSRT. A disordered region spans residues 753–780; it reads IGSEAKHEELPGTRRSRTETNGNGRLHM. Residues 771–780 are compositionally biased toward polar residues; that stretch reads ETNGNGRLHM.

Belongs to the TRAFAC class dynamin-like GTPase superfamily. Dynamin/Fzo/YdjA family. As to quaternary structure, interacts with ARC5 on peroxisomes and ELM1 on mitochondria.

Its subcellular location is the mitochondrion. The protein resides in the peroxisome. Its function is as follows. Involved in the control of mitochondrial and peroxisomal division and morphology. This Arabidopsis thaliana (Mouse-ear cress) protein is Dynamin-related protein 3B (DRP3B).